The chain runs to 524 residues: Secologanin synthase 1 (524 aa).

Residues 1–11 (MEMDMDTIRKA) lie on the Lumenal side of the membrane. A helical transmembrane segment spans residues 12 to 32 (IAATIFALVMAWAWRVLDWAW). Residues 33–524 (FTPKRIEKRL…SHVIYKKLES (492 aa)) lie on the Cytoplasmic side of the membrane. Heme is bound at residue C470.

It belongs to the cytochrome P450 family. It depends on heme as a cofactor. As to expression, upper and lower leaf epidermis.

It localises to the endoplasmic reticulum membrane. The catalysed reaction is loganin + reduced [NADPH--hemoprotein reductase] + O2 = secologanin + oxidized [NADPH--hemoprotein reductase] + 2 H2O + H(+). It catalyses the reaction secologanin + reduced [NADPH--hemoprotein reductase] + O2 = secoxyloganin + oxidized [NADPH--hemoprotein reductase] + H2O + 2 H(+). Its pathway is alkaloid biosynthesis; secologanin biosynthesis. Its function is as follows. Component of the seco-iridoid and derivatives monoterpenoid indole alkaloids (MIAs, e.g. secologanin) biosynthesis pathway. Catalyzes the conversion of loganin into secologanin. Catalyzes the conversion of secologanin into secoxyloganin. This chain is Secologanin synthase 1, found in Catharanthus roseus (Madagascar periwinkle).